A 552-amino-acid chain; its full sequence is MILERVEIVGFRGINRLSLMLEQNNVLIGENAWGKSSLLDALTLLLSPESDLYHFERDDFWFPPGDINGREHHLHIILTFRESLPGRHRVRRYRPLEACWTPCTDGYHRIFYRLEGESAEDGSVMTLRSFLDKDGHPIDVEDINDQARHLVRLMPVLRLRDARFMRRIRNGTVPNVPNVEVTARQLDFLARELSSHPQNLSDGQIRQGLSAMVQLLEHYFSEQGAGQARYRLMRRRASNEQRSWRYLDIINRMIDRPGGRSYRVILLGLFATLLQAKGTLRLDKDARPLLLIEDPETRLHPIMLSVAWHLLNLLPLQRIATTNSGELLSLTPVEHVCRLVRESSRVAAWRLGPSGLSTEDSRRISFHIRFNRPSSLFARCWLLVEGETETWVINELARQCGHHFDAEGIKVIEFAQSGLKPLVKFARRMGIEWHVLVDGDEAGKKYAATVRSLLNNDREAEREHLTALPALDMEHFMYRQGFSDVFHRMAQIPENVPMNLRKIISKAIHRSSKPDLAIEVAMEAGRRGVDSVPTLLKKMFSRVLWLARGRAD.

29-36 provides a ligand contact to ATP; that stretch reads GENAWGKS. The Toprim domain maps to 379-469; sequence RCWLLVEGET…AEREHLTALP (91 aa).

This is an uncharacterized protein from Escherichia coli (strain K12).